Here is a 113-residue protein sequence, read N- to C-terminus: Hydrogenase maturation factor HypA (113 aa).

Residue His2 participates in Ni(2+) binding. Cys70, Cys73, Cys86, and Cys88 together coordinate Zn(2+).

This sequence belongs to the HypA/HybF family.

In terms of biological role, involved in the maturation of [NiFe] hydrogenases. Required for nickel insertion into the metal center of the hydrogenase. This chain is Hydrogenase maturation factor HypA, found in Nostoc sp. (strain PCC 7120 / SAG 25.82 / UTEX 2576).